The sequence spans 274 residues: 2,3,4,5-tetrahydropyridine-2,6-dicarboxylate N-succinyltransferase (274 aa).

Positions 106 and 143 each coordinate substrate.

This sequence belongs to the transferase hexapeptide repeat family. Homotrimer.

It localises to the cytoplasm. It carries out the reaction (S)-2,3,4,5-tetrahydrodipicolinate + succinyl-CoA + H2O = (S)-2-succinylamino-6-oxoheptanedioate + CoA. It functions in the pathway amino-acid biosynthesis; L-lysine biosynthesis via DAP pathway; LL-2,6-diaminopimelate from (S)-tetrahydrodipicolinate (succinylase route): step 1/3. The protein is 2,3,4,5-tetrahydropyridine-2,6-dicarboxylate N-succinyltransferase of Cupriavidus metallidurans (strain ATCC 43123 / DSM 2839 / NBRC 102507 / CH34) (Ralstonia metallidurans).